The chain runs to 137 residues: Cellular retinoic acid-binding protein 1 (137 aa).

Positions 21 to 31 (KALGVNTMLRK) match the Nuclear localization signal motif. An all-trans-retinoate-binding site is contributed by 132–134 (RIY).

It belongs to the calycin superfamily. Fatty-acid binding protein (FABP) family.

Its subcellular location is the cytoplasm. Functionally, cytosolic CRABPs may regulate the access of retinoic acid to the nuclear retinoic acid receptors. The polypeptide is Cellular retinoic acid-binding protein 1 (crabp1) (Takifugu rubripes (Japanese pufferfish)).